Consider the following 326-residue polypeptide: Probable protein phosphatase 2C 61 (326 aa).

Residues 42–316 (LGSVSSLAGG…DDISVVCLSL (275 aa)) enclose the PPM-type phosphatase domain. Mn(2+) is bound by residues Asp-77, Gly-78, Asp-261, and Asp-307.

The protein belongs to the PP2C family. The cofactor is Mg(2+). Mn(2+) is required as a cofactor.

The enzyme catalyses O-phospho-L-seryl-[protein] + H2O = L-seryl-[protein] + phosphate. The catalysed reaction is O-phospho-L-threonyl-[protein] + H2O = L-threonyl-[protein] + phosphate. The protein is Probable protein phosphatase 2C 61 of Arabidopsis thaliana (Mouse-ear cress).